The sequence spans 249 residues: Superoxide dismutase 1 copper chaperone (249 aa).

In terms of domain architecture, HMA spans 6–69; it reads TYEATYAIPM…TLRNCGKDAI (64 aa). A Zn(2+)-binding site is contributed by His16. Positions 17 and 20 each coordinate Cu cation. Cys27 and Cys64 are disulfide-bonded. Cu cation is bound by residues Cys229 and Cys231.

The protein belongs to the CCS1 family. In terms of assembly, homodimer, and heterodimer with apo-SOD1. Zinc-binding at His-16 of CCS1 and 'Glu-43' of apo-SOD1 is required for this heterodimerization. Cu(2+) is required as a cofactor.

Its subcellular location is the cytoplasm. The protein resides in the mitochondrion intermembrane space. Copper chaperone for apo superoxide dismutase 1 (SOD1). Binds copper ions and delivers them specifically to apo-SOD1. This Saccharomyces cerevisiae (strain ATCC 204508 / S288c) (Baker's yeast) protein is Superoxide dismutase 1 copper chaperone (CCS1).